The following is a 294-amino-acid chain: Nucleotide-binding protein lp_0779 (294 aa).

12 to 19 (GMSGAGKT) lines the ATP pocket. 62–65 (DLRS) provides a ligand contact to GTP.

This sequence belongs to the RapZ-like family.

Its function is as follows. Displays ATPase and GTPase activities. This Lactiplantibacillus plantarum (strain ATCC BAA-793 / NCIMB 8826 / WCFS1) (Lactobacillus plantarum) protein is Nucleotide-binding protein lp_0779.